Reading from the N-terminus, the 330-residue chain is Cathepsin K (330 aa).

The N-terminal stretch at 1 to 16 (MWGLEVLLLLPMASFA) is a signal peptide. Residues 17–115 (LYPEEILDTQ…TLYIPDWESR (99 aa)) constitute a propeptide, activation peptide. An N-linked (GlcNAc...) asparagine glycan is attached at Asn-104. Intrachain disulfides connect Cys-137–Cys-178, Cys-171–Cys-211, and Cys-270–Cys-319. Residue Cys-140 is part of the active site. Active-site residues include His-277 and Asn-297.

Belongs to the peptidase C1 family.

The protein localises to the lysosome. Its subcellular location is the secreted. The protein resides in the apical cell membrane. The enzyme catalyses Broad proteolytic activity. With small-molecule substrates and inhibitors, the major determinant of specificity is P2, which is preferably Leu, Met &gt; Phe, and not Arg.. Its function is as follows. Thiol protease involved in osteoclastic bone resorption and may participate partially in the disorder of bone remodeling. Displays potent endoprotease activity against fibrinogen at acid pH. May play an important role in extracellular matrix degradation. Involved in the release of thyroid hormone thyroxine (T4) by limited proteolysis of TG/thyroglobulin in the thyroid follicle lumen. This chain is Cathepsin K (CTSK), found in Canis lupus familiaris (Dog).